Reading from the N-terminus, the 435-residue chain is Methylenetetrahydrofolate--tRNA-(uracil-5-)-methyltransferase TrmFO (435 aa).

10 to 15 is an FAD binding site; the sequence is GAGLAG.

The protein belongs to the MnmG family. TrmFO subfamily. Requires FAD as cofactor.

The protein resides in the cytoplasm. It carries out the reaction uridine(54) in tRNA + (6R)-5,10-methylene-5,6,7,8-tetrahydrofolate + NADH + H(+) = 5-methyluridine(54) in tRNA + (6S)-5,6,7,8-tetrahydrofolate + NAD(+). The catalysed reaction is uridine(54) in tRNA + (6R)-5,10-methylene-5,6,7,8-tetrahydrofolate + NADPH + H(+) = 5-methyluridine(54) in tRNA + (6S)-5,6,7,8-tetrahydrofolate + NADP(+). Its function is as follows. Catalyzes the folate-dependent formation of 5-methyl-uridine at position 54 (M-5-U54) in all tRNAs. The polypeptide is Methylenetetrahydrofolate--tRNA-(uracil-5-)-methyltransferase TrmFO (Bacillus velezensis (strain DSM 23117 / BGSC 10A6 / LMG 26770 / FZB42) (Bacillus amyloliquefaciens subsp. plantarum)).